The chain runs to 374 residues: MLRLTSARSIVSPLRKGAFGSIRTLATSVPETQKGVIFYENGGKLEYKDIPVPKPKPNEILINVKYSGVCHTDLHAWKGDWPLPTKLPLVGGHEGAGVVVAMGENVKGWNIGDFAGIKWLNGSCMSCEYCELSNESNCPDADLSGYTHDGSFQQYATADAVQAARIPKGTDLAEVAPILCAGVTVYKALKSANLKAGDWVAISGAAGGLGSLAVQYAKAMGYRVVGIDGGEEKGKLVKQLGGEAFVDFTKTKDMVAEIQEITNGGPHGVINVSVSEAAMNASTQFVRPTGTVVLVGLPAGAVIKSEVFSHVVKSINIKGSYVGNRADTREAINFFANGHVHSPIKVVGLSELPKVYELMEQGKILGRYVVDTSN.

Residues M1–A26 constitute a mitochondrion transit peptide. 7 residues coordinate Zn(2+): C70, H93, C124, C127, C130, C138, and C180. NAD(+) contacts are provided by residues G204 to G210, D228, K233, V295 to L297, and R367.

The protein belongs to the zinc-containing alcohol dehydrogenase family. Homotetramer. The cofactor is Zn(2+).

It localises to the mitochondrion matrix. It catalyses the reaction a primary alcohol + NAD(+) = an aldehyde + NADH + H(+). The enzyme catalyses a secondary alcohol + NAD(+) = a ketone + NADH + H(+). The chain is Alcohol dehydrogenase 3, mitochondrial (ADH3) from Kluyveromyces lactis (strain ATCC 8585 / CBS 2359 / DSM 70799 / NBRC 1267 / NRRL Y-1140 / WM37) (Yeast).